Reading from the N-terminus, the 225-residue chain is Uracil-DNA glycosylase (225 aa).

Asp-65 functions as the Proton acceptor in the catalytic mechanism.

Belongs to the uracil-DNA glycosylase (UDG) superfamily. UNG family.

It localises to the cytoplasm. The catalysed reaction is Hydrolyzes single-stranded DNA or mismatched double-stranded DNA and polynucleotides, releasing free uracil.. Excises uracil residues from the DNA which can arise as a result of misincorporation of dUMP residues by DNA polymerase or due to deamination of cytosine. The chain is Uracil-DNA glycosylase from Bacillus licheniformis (strain ATCC 14580 / DSM 13 / JCM 2505 / CCUG 7422 / NBRC 12200 / NCIMB 9375 / NCTC 10341 / NRRL NRS-1264 / Gibson 46).